Here is a 301-residue protein sequence, read N- to C-terminus: Protein FdhE homolog (301 aa).

The protein belongs to the FdhE family.

The protein resides in the cytoplasm. Functionally, necessary for formate dehydrogenase activity. The protein is Protein FdhE homolog of Erwinia tasmaniensis (strain DSM 17950 / CFBP 7177 / CIP 109463 / NCPPB 4357 / Et1/99).